Reading from the N-terminus, the 237-residue chain is CD99 antigen-like protein 2 (237 aa).

The signal sequence occupies residues 1 to 25; the sequence is MVARLTAFLVCLVFSLATLVQRGYG. The Extracellular segment spans residues 26-161; that stretch reads DTDGFNLEDA…PGSGISTETG (136 aa). The segment at 47–157 is disordered; it reads DHFSTTTRRP…SNDDPGSGIS (111 aa). Low complexity-rich tracts occupy residues 51–66 and 74–84; these read TTTRRPVTTRAPANPA and TTTTRRPGTTR. Residues 102 to 111 show a composition bias toward basic and acidic residues; sequence DDRNDLDGPK. Ser154 is a glycosylation site (O-linked (Xyl...) (chondroitin sulfate) serine). A helical membrane pass occupies residues 162 to 182; the sequence is TIAGVASALAMALIGAVSSYI. Residues 183–237 are Cytoplasmic-facing; the sequence is SYQQKKFCFSIQQGLNADYVKGENLEAVVCEEPQVTYSKQETQSAEPPPPEPPRI. A compositionally biased stretch (polar residues) spans 218 to 227; that stretch reads TYSKQETQSA. The segment at 218–237 is disordered; the sequence is TYSKQETQSAEPPPPEPPRI. A compositionally biased stretch (pro residues) spans 228–237; the sequence is EPPPPEPPRI.

This sequence belongs to the CD99 family. Post-translationally, O-glycosylated. In terms of tissue distribution, highly expressed in the nervous system, including brain, dentate nucleus of hippocampus, granular and Purkinje cells of cerebellum, brain stem nucleus and choroid plexus. Expressed in peripheral blood T- and B-cells and neutrophils (at protein level). Almost undetectable in bone marrow-derived neutrophils (at protein level). Also expressed in thymocytes (at protein level) with higher expression in cortical thymocytes than in medullary thymocytes. Expressed at high levels in testis (mostly in germ cells and Sertoli cells) and ovary (mostly in granulosa cells). Expressed in lung, heart, kidney and liver (at protein level); however, expression in heart, kidney and liver seems restricted to endothelial cells (at protein level). Highly expressed in endothelial cells and to a lower level in vascular smooth muscle cells (at protein level). Low expression in spleen.

The protein localises to the cell membrane. The protein resides in the cell junction. It localises to the secreted. Its function is as follows. Plays a role in a late step of leukocyte extravasation helping cells to overcome the endothelial basement membrane. Acts at the same site as, but independently of, PECAM1. Homophilic adhesion molecule, but these interactions may not be required for cell aggregation. The sequence is that of CD99 antigen-like protein 2 (Cd99l2) from Mus musculus (Mouse).